The primary structure comprises 728 residues: Phosphoribosylformylglycinamidine synthase subunit PurL (728 aa).

Histidine 40 is an active-site residue. ATP contacts are provided by tyrosine 43 and lysine 82. Residue glutamate 84 participates in Mg(2+) binding. Residues 85 to 88 and arginine 107 contribute to the substrate site; that span reads SHNH. The active-site Proton acceptor is the histidine 86. Aspartate 108 provides a ligand contact to Mg(2+). A substrate-binding site is contributed by glutamine 231. Residue aspartate 259 participates in Mg(2+) binding. Residue 303–305 participates in substrate binding; it reads ESQ. Asparagine 483 and glycine 520 together coordinate ATP. Residue asparagine 521 participates in Mg(2+) binding. Substrate is bound at residue serine 523.

It belongs to the FGAMS family. In terms of assembly, monomer. Part of the FGAM synthase complex composed of 1 PurL, 1 PurQ and 2 PurS subunits.

It is found in the cytoplasm. It carries out the reaction N(2)-formyl-N(1)-(5-phospho-beta-D-ribosyl)glycinamide + L-glutamine + ATP + H2O = 2-formamido-N(1)-(5-O-phospho-beta-D-ribosyl)acetamidine + L-glutamate + ADP + phosphate + H(+). It functions in the pathway purine metabolism; IMP biosynthesis via de novo pathway; 5-amino-1-(5-phospho-D-ribosyl)imidazole from N(2)-formyl-N(1)-(5-phospho-D-ribosyl)glycinamide: step 1/2. Part of the phosphoribosylformylglycinamidine synthase complex involved in the purines biosynthetic pathway. Catalyzes the ATP-dependent conversion of formylglycinamide ribonucleotide (FGAR) and glutamine to yield formylglycinamidine ribonucleotide (FGAM) and glutamate. The FGAM synthase complex is composed of three subunits. PurQ produces an ammonia molecule by converting glutamine to glutamate. PurL transfers the ammonia molecule to FGAR to form FGAM in an ATP-dependent manner. PurS interacts with PurQ and PurL and is thought to assist in the transfer of the ammonia molecule from PurQ to PurL. This chain is Phosphoribosylformylglycinamidine synthase subunit PurL, found in Carboxydothermus hydrogenoformans (strain ATCC BAA-161 / DSM 6008 / Z-2901).